The following is a 253-amino-acid chain: Octanoyltransferase (253 aa).

Residues 47-236 (PETPDQVWLV…ALCEVLAARE (190 aa)) form the BPL/LPL catalytic domain. Residues 87 to 94 (RGGQITYH), 159 to 161 (ALG), and 172 to 174 (GVS) contribute to the substrate site. Catalysis depends on C190, which acts as the Acyl-thioester intermediate.

Belongs to the LipB family.

The protein localises to the cytoplasm. The catalysed reaction is octanoyl-[ACP] + L-lysyl-[protein] = N(6)-octanoyl-L-lysyl-[protein] + holo-[ACP] + H(+). It participates in protein modification; protein lipoylation via endogenous pathway; protein N(6)-(lipoyl)lysine from octanoyl-[acyl-carrier-protein]: step 1/2. In terms of biological role, catalyzes the transfer of endogenously produced octanoic acid from octanoyl-acyl-carrier-protein onto the lipoyl domains of lipoate-dependent enzymes. Lipoyl-ACP can also act as a substrate although octanoyl-ACP is likely to be the physiological substrate. This Cupriavidus pinatubonensis (strain JMP 134 / LMG 1197) (Cupriavidus necator (strain JMP 134)) protein is Octanoyltransferase.